Here is a 156-residue protein sequence, read N- to C-terminus: ATP synthase subunit b (156 aa).

The helical transmembrane segment at 5-25 (LTMIGQAIAFFIFVVFCMKYV) threads the bilayer.

It belongs to the ATPase B chain family. As to quaternary structure, F-type ATPases have 2 components, F(1) - the catalytic core - and F(0) - the membrane proton channel. F(1) has five subunits: alpha(3), beta(3), gamma(1), delta(1), epsilon(1). F(0) has three main subunits: a(1), b(2) and c(10-14). The alpha and beta chains form an alternating ring which encloses part of the gamma chain. F(1) is attached to F(0) by a central stalk formed by the gamma and epsilon chains, while a peripheral stalk is formed by the delta and b chains.

It is found in the cell inner membrane. Functionally, f(1)F(0) ATP synthase produces ATP from ADP in the presence of a proton or sodium gradient. F-type ATPases consist of two structural domains, F(1) containing the extramembraneous catalytic core and F(0) containing the membrane proton channel, linked together by a central stalk and a peripheral stalk. During catalysis, ATP synthesis in the catalytic domain of F(1) is coupled via a rotary mechanism of the central stalk subunits to proton translocation. Its function is as follows. Component of the F(0) channel, it forms part of the peripheral stalk, linking F(1) to F(0). This is ATP synthase subunit b from Hahella chejuensis (strain KCTC 2396).